A 557-amino-acid chain; its full sequence is High-affinity hexose transporter ght4 (557 aa).

The Cytoplasmic portion of the chain corresponds to 1 to 9; sequence MGRTLTSVL. The chain crosses the membrane as a helical span at residues 10-30; the sequence is VVFISMAGWLGGADTGSISGI. The Extracellular portion of the chain corresponds to 31-58; sequence LGMRDFQSRFADRYNPITNSYSYSAWRQ. A helical membrane pass occupies residues 59–79; the sequence is ALLTGTVNAGCLFGAMLSSPF. At 80-87 the chain is on the cytoplasmic side; the sequence is TEAIGKKY. The chain crosses the membrane as a helical span at residues 88–108; sequence SIAFFSGCYIIGQILLVTAVP. Residues 109 to 112 are Extracellular-facing; sequence SWVQ. The chain crosses the membrane as a helical span at residues 113–133; that stretch reads IMVGKLFTGLTIGALSVLSPG. Over 134–144 the chain is Cytoplasmic; it reads YQSEVAPPQIR. The chain crosses the membrane as a helical span at residues 145–165; sequence GAVVSTYQLFQTCGTLIAACI. The Extracellular portion of the chain corresponds to 166–179; the sequence is NMGTHKLRKTASWR. The chain crosses the membrane as a helical span at residues 180–200; sequence TSFGINILWGIFLMVGVLFLP. Over 201-266 the chain is Cytoplasmic; that stretch reads ESPRYLIYKG…VFGKEVRYRT (66 aa). A helical membrane pass occupies residues 267–285; sequence VLGFLTMLLRELIGNNYYF. Topologically, residues 286–301 are extracellular; sequence YYATQVFKGTGMTDIF. Residues 302 to 322 form a helical membrane-spanning segment; it reads LPAVILGAINFGTTFGALYTI. At 323–328 the chain is on the cytoplasmic side; the sequence is DNLGRR. Residues 329–349 traverse the membrane as a helical segment; it reads NPLIFGAAFQSICFFIYAAVG. Over 350–363 the chain is Extracellular; that stretch reads DRKLIYKNGTSDHR. N-linked (GlcNAc...) asparagine glycosylation occurs at N357. A helical transmembrane segment spans residues 364–384; that stretch reads AGAVMIVFSCLFLFSYCCSWG. Residues 385-404 lie on the Cytoplasmic side of the membrane; sequence PMGWVIVGETFPIRYRSKCA. The chain crosses the membrane as a helical span at residues 405–425; that stretch reads AVATSGNWLGNFMVSFFTPFI. Residues 426 to 432 are Extracellular-facing; the sequence is SNSIGFK. The helical transmembrane segment at 433–453 threads the bilayer; the sequence is LGYIYACINMTSAFQIFLMAK. Residues 454–557 lie on the Cytoplasmic side of the membrane; that stretch reads ETKGLTLEEV…VSEESHPTWV (104 aa). A compositionally biased stretch (basic and acidic residues) spans 492–514; that stretch reads KEEEKREREKSKGYRGQEERFIE. The disordered stretch occupies residues 492-557; sequence KEEEKREREK…VSEESHPTWV (66 aa). The segment covering 524 to 536 has biased composition (low complexity); it reads SSASSESFASAGA. A compositionally biased stretch (basic and acidic residues) spans 547 to 557; sequence NVSEESHPTWV.

The protein belongs to the major facilitator superfamily. Sugar transporter (TC 2.A.1.1) family.

It is found in the membrane. The chain is High-affinity hexose transporter ght4 (ght4) from Schizosaccharomyces pombe (strain 972 / ATCC 24843) (Fission yeast).